The sequence spans 616 residues: Chaperone protein HscA homolog (616 aa).

Belongs to the heat shock protein 70 family.

Its function is as follows. Chaperone involved in the maturation of iron-sulfur cluster-containing proteins. Has a low intrinsic ATPase activity which is markedly stimulated by HscB. In Tolumonas auensis (strain DSM 9187 / NBRC 110442 / TA 4), this protein is Chaperone protein HscA homolog.